The primary structure comprises 462 residues: CUGBP Elav-like family member 3-B (462 aa).

3 RRM domains span residues 7–88 (IKLF…PADS), 95–175 (RKLF…FADT), and 377–455 (CNIF…LKRP).

The protein belongs to the CELF/BRUNOL family.

It localises to the nucleus. Its subcellular location is the cytoplasm. Functionally, RNA-binding protein that may be involved in the regulation of pre-mRNA alternative splicing. This chain is CUGBP Elav-like family member 3-B (tnrc4-b), found in Xenopus laevis (African clawed frog).